The sequence spans 775 residues: Protein STRUBBELIG-RECEPTOR FAMILY 1 (775 aa).

A signal peptide spans 1–31; the sequence is MRSMRSGRDNNICFLGFLSFALISLPSLSLA. At 32-314 the chain is on the extracellular side; sequence LTNPDDVAAI…GKEDSFTSKR (283 aa). 6 LRR repeats span residues 101–122, 123–146, 147–169, 171–193, 195–217, and 218–238; these read SLKA…TLPV, SLQN…SSLK, SLSV…FQDL, LMIN…MQNL, TLTS…QDLP, and LKDL…KLLS. An N-linked (GlcNAc...) asparagine glycan is attached at N133. 2 N-linked (GlcNAc...) asparagine glycosylation sites follow: N181 and N192. A glycan (N-linked (GlcNAc...) asparagine) is linked at N250. Residues 254–308 form a disordered region; it reads APSPSPETPPSPTSPKRPFFGPPSPNASAGHGQAHVRSPPSDHHPSRPTPQGKED. Residues 256–278 show a composition bias toward pro residues; it reads SPSPETPPSPTSPKRPFFGPPSP. The N-linked (GlcNAc...) asparagine glycan is linked to N279. A helical transmembrane segment spans residues 315–335; the sequence is IIWISILGAFSFVVLALVCLL. Residues 336 to 775 lie on the Cytoplasmic side of the membrane; that stretch reads CGRKCLRKRE…NGDNQYTGRR (440 aa). The interval 345–414 is disordered; it reads EDSEQLSKPH…VGSESKQESH (70 aa). Residues 367–379 are compositionally biased toward polar residues; it reads RSNASMLPPSNTF. Residues 380–391 show a composition bias toward basic and acidic residues; sequence NKDKEARPKERV. In terms of domain architecture, Protein kinase spans 478–756; it reads FSHENLIGTG…EVVQDLSDMI (279 aa).

This sequence belongs to the protein kinase superfamily. Ser/Thr protein kinase family. In terms of tissue distribution, expressed in roots, stems, leaves and flowers. Low expression in seedlings and siliques.

It is found in the membrane. Its function is as follows. Not essential for epidermal patterning and not redundant with STRUBBELIG. The protein is Protein STRUBBELIG-RECEPTOR FAMILY 1 (SRF1) of Arabidopsis thaliana (Mouse-ear cress).